The following is a 485-amino-acid chain: Acyl transferase 1 (485 aa).

His172 functions as the Proton acceptor in the catalytic mechanism.

The protein belongs to the plant acyltransferase family. Highly expressed in young panicles. Expressed in leaf sheaths and panicles.

Its function is as follows. Involved in defense against pathogens. May contribute to disease resistance by potentiating disease resistance signaling, or producing phytoalexin-like secondary products. This Oryza sativa subsp. japonica (Rice) protein is Acyl transferase 1.